An 887-amino-acid polypeptide reads, in one-letter code: Alanine--tRNA ligase (887 aa).

Residues 425-441 (MQEQKSRARSDRREKQQ) show a composition bias toward basic and acidic residues. The segment at 425 to 448 (MQEQKSRARSDRREKQQTGDGAGS) is disordered. Residues H569, H573, C672, and H676 each contribute to the Zn(2+) site.

This sequence belongs to the class-II aminoacyl-tRNA synthetase family. The cofactor is Zn(2+).

The protein resides in the cytoplasm. The catalysed reaction is tRNA(Ala) + L-alanine + ATP = L-alanyl-tRNA(Ala) + AMP + diphosphate. Its function is as follows. Catalyzes the attachment of alanine to tRNA(Ala) in a two-step reaction: alanine is first activated by ATP to form Ala-AMP and then transferred to the acceptor end of tRNA(Ala). Also edits incorrectly charged Ser-tRNA(Ala) and Gly-tRNA(Ala) via its editing domain. In Chlorobium luteolum (strain DSM 273 / BCRC 81028 / 2530) (Pelodictyon luteolum), this protein is Alanine--tRNA ligase.